The chain runs to 186 residues: Peptidyl-tRNA hydrolase (186 aa).

TRNA is bound at residue Tyr-14. His-19 acts as the Proton acceptor in catalysis. 3 residues coordinate tRNA: Phe-65, Asn-67, and Asn-113.

This sequence belongs to the PTH family. Monomer.

It localises to the cytoplasm. The enzyme catalyses an N-acyl-L-alpha-aminoacyl-tRNA + H2O = an N-acyl-L-amino acid + a tRNA + H(+). Functionally, hydrolyzes ribosome-free peptidyl-tRNAs (with 1 or more amino acids incorporated), which drop off the ribosome during protein synthesis, or as a result of ribosome stalling. Its function is as follows. Catalyzes the release of premature peptidyl moieties from peptidyl-tRNA molecules trapped in stalled 50S ribosomal subunits, and thus maintains levels of free tRNAs and 50S ribosomes. In Limosilactobacillus reuteri (strain DSM 20016) (Lactobacillus reuteri), this protein is Peptidyl-tRNA hydrolase.